Consider the following 104-residue polypeptide: Growth-regulated protein homolog (104 aa).

The first 31 residues, 1–31 (MAPAATAAAPRLLRAALLLLLLVAAGRRAAG), serve as a signal peptide directing secretion. 2 disulfides stabilise this stretch: Cys40–Cys66 and Cys42–Cys82.

It belongs to the intercrine alpha (chemokine CxC) family.

The protein resides in the secreted. Its function is as follows. Plays a role in monocyte adhesion to the endothelium. The sequence is that of Growth-regulated protein homolog from Oryctolagus cuniculus (Rabbit).